The chain runs to 721 residues: Quinolinate synthase, chloroplastic (721 aa).

The N-terminal 67 residues, 1 to 67, are a transit peptide targeting the chloroplast; it reads MDAANLVMKS…KIPSNNSTFT (67 aa). Residue Cys133 is the Cysteine persulfide intermediate of the active site. Iminosuccinate is bound by residues His283 and Ser309. Cys363 is a binding site for [4Fe-4S] cluster. Residues 392-394 and Ser414 contribute to the iminosuccinate site; that span reads YIN. Cys487 provides a ligand contact to [4Fe-4S] cluster. Iminosuccinate is bound by residues 513 to 515 and Thr538; that span reads HFE. Cys643 contacts [4Fe-4S] cluster.

It belongs to the quinolinate synthase family. Type 1 subfamily. As to quaternary structure, homodimer. Requires [4Fe-4S] cluster as cofactor.

Its subcellular location is the plastid. The protein resides in the chloroplast. The catalysed reaction is iminosuccinate + dihydroxyacetone phosphate = quinolinate + phosphate + 2 H2O + H(+). The protein operates within alkaloid biosynthesis; nicotine biosynthesis. It participates in cofactor biosynthesis; NAD(+) biosynthesis; quinolinate from iminoaspartate: step 1/1. Functionally, involved in the biosynthesis of pyridine alkaloid natural products, leading mainly to the production of anabasine, anatabine, nicotine and nornicotine, effective deterrents against herbivores with antiparasitic and pesticide properties (neurotoxins); nornicotine serves as the precursor in the synthesis of the carcinogen compound N'-nitrosonornicotine (NNN). Catalyzes the condensation of iminoaspartate with dihydroxyacetone phosphate to form quinolinate. This chain is Quinolinate synthase, chloroplastic, found in Nicotiana tabacum (Common tobacco).